The following is a 444-amino-acid chain: F-box protein At1g53790 (444 aa).

An F-box domain is found at 76 to 125 (VSCFRYIPIDLLMDIFSRVPAKSIARFRCVSKLWESILCRPDFKELFMTM).

In Arabidopsis thaliana (Mouse-ear cress), this protein is F-box protein At1g53790.